The sequence spans 546 residues: Probable protein kinase UbiB (546 aa).

Positions 124–502 (DFSVEPLASA…HVRQGQSRYL (379 aa)) constitute a Protein kinase domain. ATP contacts are provided by residues 130–138 (LASASIAQV) and Lys153. Asp288 functions as the Proton acceptor in the catalytic mechanism. Helical transmembrane passes span 501–521 (YLFGIGAVLLLSGTLLFIHRP) and 522–542 (EWGMMPGWLMAGGVVTWLIGW).

The protein belongs to the ABC1 family. UbiB subfamily.

The protein resides in the cell inner membrane. It participates in cofactor biosynthesis; ubiquinone biosynthesis [regulation]. Its function is as follows. Is probably a protein kinase regulator of UbiI activity which is involved in aerobic coenzyme Q (ubiquinone) biosynthesis. The protein is Probable protein kinase UbiB of Klebsiella pneumoniae subsp. pneumoniae (strain ATCC 700721 / MGH 78578).